Reading from the N-terminus, the 138-residue chain is ATP synthase epsilon chain (138 aa).

The protein belongs to the ATPase epsilon chain family. F-type ATPases have 2 components, CF(1) - the catalytic core - and CF(0) - the membrane proton channel. CF(1) has five subunits: alpha(3), beta(3), gamma(1), delta(1), epsilon(1). CF(0) has three main subunits: a, b and c.

It is found in the cell inner membrane. Its function is as follows. Produces ATP from ADP in the presence of a proton gradient across the membrane. The sequence is that of ATP synthase epsilon chain from Methylibium petroleiphilum (strain ATCC BAA-1232 / LMG 22953 / PM1).